The following is a 651-amino-acid chain: Acetyl-coenzyme A synthetase (651 aa).

CoA contacts are provided by residues 191 to 194 (RGGK), threonine 311, and asparagine 335. ATP-binding positions include 387-389 (GEP), 411-416 (DTWWQT), aspartate 500, and arginine 515. Serine 523 is a binding site for CoA. An ATP-binding site is contributed by arginine 526. Positions 537, 539, and 542 each coordinate Mg(2+). Arginine 584 is a binding site for CoA. Lysine 609 carries the post-translational modification N6-acetyllysine.

The protein belongs to the ATP-dependent AMP-binding enzyme family. Requires Mg(2+) as cofactor. In terms of processing, acetylated. Deacetylation by the SIR2-homolog deacetylase activates the enzyme.

The enzyme catalyses acetate + ATP + CoA = acetyl-CoA + AMP + diphosphate. Its function is as follows. Catalyzes the conversion of acetate into acetyl-CoA (AcCoA), an essential intermediate at the junction of anabolic and catabolic pathways. AcsA undergoes a two-step reaction. In the first half reaction, AcsA combines acetate with ATP to form acetyl-adenylate (AcAMP) intermediate. In the second half reaction, it can then transfer the acetyl group from AcAMP to the sulfhydryl group of CoA, forming the product AcCoA. This is Acetyl-coenzyme A synthetase from Pseudomonas savastanoi pv. phaseolicola (strain 1448A / Race 6) (Pseudomonas syringae pv. phaseolicola (strain 1448A / Race 6)).